A 229-amino-acid chain; its full sequence is Small ribosomal subunit protein uS3 (229 aa).

Residues 18 to 87 (IDEYLAKQYY…NPQITITNVE (70 aa)) form the KH type-2 domain.

The protein belongs to the universal ribosomal protein uS3 family. As to quaternary structure, part of the 30S ribosomal subunit.

In terms of biological role, binds the lower part of the 30S subunit head. The polypeptide is Small ribosomal subunit protein uS3 (Saccharolobus solfataricus (strain ATCC 35092 / DSM 1617 / JCM 11322 / P2) (Sulfolobus solfataricus)).